Reading from the N-terminus, the 372-residue chain is 3-dehydroquinate synthase (372 aa).

NAD(+)-binding positions include 116 to 120, 140 to 141, lysine 153, lysine 162, and 180 to 183; these read GVVGD, TT, and TLNT. Zn(2+) contacts are provided by glutamate 195, histidine 260, and histidine 277.

This sequence belongs to the sugar phosphate cyclases superfamily. Dehydroquinate synthase family. Requires Co(2+) as cofactor. The cofactor is Zn(2+). It depends on NAD(+) as a cofactor.

The protein resides in the cytoplasm. The enzyme catalyses 7-phospho-2-dehydro-3-deoxy-D-arabino-heptonate = 3-dehydroquinate + phosphate. Its pathway is metabolic intermediate biosynthesis; chorismate biosynthesis; chorismate from D-erythrose 4-phosphate and phosphoenolpyruvate: step 2/7. Catalyzes the conversion of 3-deoxy-D-arabino-heptulosonate 7-phosphate (DAHP) to dehydroquinate (DHQ). The chain is 3-dehydroquinate synthase from Prochlorococcus marinus (strain MIT 9303).